Here is a 164-residue protein sequence, read N- to C-terminus: uncharacterized protein (164 aa).

The tract at residues 144 to 164 is disordered; it reads GFISPEKEHESEDMTSQSLVA.

This is an uncharacterized protein from Synechocystis sp. (strain ATCC 27184 / PCC 6803 / Kazusa).